A 310-amino-acid chain; its full sequence is HPr kinase/phosphorylase (310 aa).

Residues His138 and Lys159 contribute to the active site. 153 to 160 (GDSGIGKS) contributes to the ATP binding site. Residue Ser160 coordinates Mg(2+). Catalysis depends on Asp177, which acts as the Proton acceptor; for phosphorylation activity. Proton donor; for dephosphorylation activity. The tract at residues 201 to 210 (LEIRGVGIID) is important for the catalytic mechanism of both phosphorylation and dephosphorylation. Mg(2+) is bound at residue Glu202. The active site involves Arg243. The tract at residues 264–269 (PVKTGR) is important for the catalytic mechanism of dephosphorylation.

It belongs to the HPrK/P family. In terms of assembly, homohexamer. Mg(2+) serves as cofactor.

The enzyme catalyses [HPr protein]-L-serine + ATP = [HPr protein]-O-phospho-L-serine + ADP + H(+). It carries out the reaction [HPr protein]-O-phospho-L-serine + phosphate + H(+) = [HPr protein]-L-serine + diphosphate. Catalyzes the ATP- as well as the pyrophosphate-dependent phosphorylation of a specific serine residue in HPr, a phosphocarrier protein of the phosphoenolpyruvate-dependent sugar phosphotransferase system (PTS). HprK/P also catalyzes the pyrophosphate-producing, inorganic phosphate-dependent dephosphorylation (phosphorolysis) of seryl-phosphorylated HPr (P-Ser-HPr). The two antagonistic activities of HprK/P are regulated by several intracellular metabolites, which change their concentration in response to the absence or presence of rapidly metabolisable carbon sources (glucose, fructose, etc.) in the growth medium. Therefore, by controlling the phosphorylation state of HPr, HPrK/P is a sensor enzyme that plays a major role in the regulation of carbon metabolism and sugar transport: it mediates carbon catabolite repression (CCR), and regulates PTS-catalyzed carbohydrate uptake and inducer exclusion. The sequence is that of HPr kinase/phosphorylase from Streptococcus equi subsp. equi (strain 4047).